We begin with the raw amino-acid sequence, 1386 residues long: DNA-directed RNA polymerase subunit beta'' (1386 aa).

Zn(2+) is bound by residues Cys220, Cys289, Cys296, and Cys299.

The protein belongs to the RNA polymerase beta' chain family. RpoC2 subfamily. As to quaternary structure, in plastids the minimal PEP RNA polymerase catalytic core is composed of four subunits: alpha, beta, beta', and beta''. When a (nuclear-encoded) sigma factor is associated with the core the holoenzyme is formed, which can initiate transcription. Zn(2+) serves as cofactor.

The protein resides in the plastid. It is found in the chloroplast. It catalyses the reaction RNA(n) + a ribonucleoside 5'-triphosphate = RNA(n+1) + diphosphate. In terms of biological role, DNA-dependent RNA polymerase catalyzes the transcription of DNA into RNA using the four ribonucleoside triphosphates as substrates. This is DNA-directed RNA polymerase subunit beta'' from Marchantia polymorpha (Common liverwort).